The following is a 77-amino-acid chain: Cysteine-rich protein 1 (77 aa).

Residues 2–63 (PKCPKCSKEV…HPCYAAMFGP (62 aa)) form the LIM zinc-binding domain. K9 and K22 each carry N6-acetyllysine. Position 68 is an omega-N-methylarginine (R68).

Seems to have a role in zinc absorption and may function as an intracellular zinc transport protein. The protein is Cysteine-rich protein 1 (CRIP1) of Bos taurus (Bovine).